Consider the following 348-residue polypeptide: MGYKISIDAMGGDHGLNTTIPAALEAVKKDSNLQIVLVGDHHKVKRALDRYSKVKKIKLPVLQRIAIHHASETVGMDESPSIAVRKKKDSSMRVAINLVKDRTVDACVSAGNTGALMATSKFVLKTINGVDRPAIVYALPAFNRETKQLSKTYMLDLGANVVCTSEQLFQFAIMGSILAASSKGIAEPRVSLLNIGEEEMKGLDNIKNAAKLLQGCDFINYNGYIEGKYIFDDTTDVIVCDGFVGNVSLKTMEGSLRLIESLIKKTIQESSLLMKIPIVMALPIFKKMKKGMNLDSFNGASLLGLTGIVVKSHGGASANAFETAIYEAIKEIKYNIPKTIQESLEKVL.

Belongs to the PlsX family. Homodimer. Probably interacts with PlsY.

The protein localises to the cytoplasm. The catalysed reaction is a fatty acyl-[ACP] + phosphate = an acyl phosphate + holo-[ACP]. It participates in lipid metabolism; phospholipid metabolism. Its function is as follows. Catalyzes the reversible formation of acyl-phosphate (acyl-PO(4)) from acyl-[acyl-carrier-protein] (acyl-ACP). This enzyme utilizes acyl-ACP as fatty acyl donor, but not acyl-CoA. This Francisella tularensis subsp. novicida (strain U112) protein is Phosphate acyltransferase.